A 704-amino-acid polypeptide reads, in one-letter code: Ribosomal RNA large subunit methyltransferase K/L (704 aa).

A THUMP domain is found at 43 to 154 (TMYQSLLWSR…KEKASLSLDL (112 aa)).

This sequence belongs to the methyltransferase superfamily. RlmKL family.

Its subcellular location is the cytoplasm. It carries out the reaction guanosine(2445) in 23S rRNA + S-adenosyl-L-methionine = N(2)-methylguanosine(2445) in 23S rRNA + S-adenosyl-L-homocysteine + H(+). The catalysed reaction is guanosine(2069) in 23S rRNA + S-adenosyl-L-methionine = N(2)-methylguanosine(2069) in 23S rRNA + S-adenosyl-L-homocysteine + H(+). Its function is as follows. Specifically methylates the guanine in position 2445 (m2G2445) and the guanine in position 2069 (m7G2069) of 23S rRNA. In Proteus mirabilis (strain HI4320), this protein is Ribosomal RNA large subunit methyltransferase K/L.